The chain runs to 37 residues: Large ribosomal subunit protein bL36 (37 aa).

It belongs to the bacterial ribosomal protein bL36 family.

The chain is Large ribosomal subunit protein bL36 from Helicobacter pylori (strain HPAG1).